The following is a 500-amino-acid chain: Potassium voltage-gated channel subfamily V member 1 (500 aa).

Topologically, residues 1–210 are cytoplasmic; the sequence is MPSSGRALLD…EKPGSSTAAR (210 aa). The segment covering 168-181 has biased composition (basic and acidic residues); sequence KKDTEDQESQHESE. The segment at 168 to 189 is disordered; the sequence is KKDTEDQESQHESEQDFSQGPC. The helical transmembrane segment at 211–231 threads the bilayer; the sequence is IFGVISIIFVVVSIINMALMS. Residues 232–238 lie on the Extracellular side of the membrane; sequence AELSWLD. A helical membrane pass occupies residues 239-259; that stretch reads LQLLEILEYVCISWFTGEFVL. Residues 260–276 lie on the Cytoplasmic side of the membrane; it reads RFLCVRDRCRFLRKVPN. A helical membrane pass occupies residues 277–297; sequence IIDLLAILPFYITLLVESLSG. Residues 298-309 lie on the Extracellular side of the membrane; it reads SQTTQELENVGR. A helical; Voltage-sensor membrane pass occupies residues 310-331; it reads IVQVLRLLRALRMLKLGRHSTG. The Cytoplasmic segment spans residues 332-345; sequence LRSLGMTITQCYEE. A helical transmembrane segment spans residues 346-366; it reads VGLLLLFLSVGISIFSTVEYF. The Selectivity filter motif lies at 392-397; the sequence is TVGYGD. A helical membrane pass occupies residues 407–427; sequence IVAFMCILSGILVLALPIAII. The Cytoplasmic portion of the chain corresponds to 428-500; that stretch reads NDRFSACYFT…RSSGGDDFWF (73 aa).

The protein belongs to the potassium channel family. V (TC 1.A.1.2) subfamily. Kv8.1/KCNV1 sub-subfamily. As to quaternary structure, heteromultimer with KCNB1 and KCNB2. Interacts with KCNC4 and KCND1. In terms of tissue distribution, detected in brain.

The protein resides in the cell membrane. Its function is as follows. Potassium channel subunit that does not form functional channels by itself. Modulates KCNB1 and KCNB2 channel activity by shifting the threshold for inactivation to more negative values and by slowing the rate of inactivation. Can down-regulate the channel activity of KCNB1, KCNB2, KCNC4 and KCND1, possibly by trapping them in intracellular membranes. The polypeptide is Potassium voltage-gated channel subfamily V member 1 (KCNV1) (Homo sapiens (Human)).